The following is a 323-amino-acid chain: MGSRVSREDFEWVYTDQPHADRRREILAKYPEIKSLMKPDPNLIWIIIMMVLTQLGAFYIVKDLDWKWVIFGAYAFGSCINHSMTLAIHEIAHNAAFGNCKAMWNRWFGMFANLPIGIPYSISFKRYHMDHHRYLGADGVDVDIPTDFEGWFFCTAFRKFIWVILQPLFYAFRPLFINPKPITYLEVINTVAQVTFDILIYYFLGIKSLVYMLAASLLGLGLHPISGHFIAEHYMFLKGHETYSYYGPLNLLTFNVGYHNEHHDFPNIPGKSLPLVRKIAAEYYDNLPHYNSWIKVLYDFVMDDTISPYSRMKRHQKGEMVLE.

A lipid anchor (N-myristoyl glycine) is attached at G2. The next 2 helical transmembrane spans lie at 41–61 and 68–88; these read PNLI…FYIV and WVIF…TLAI. The short motif at 89 to 93 is the Histidine box-1 element; sequence HEIAH. Residues 102–122 traverse the membrane as a helical segment; that stretch reads AMWNRWFGMFANLPIGIPYSI. Positions 128-132 match the Histidine box-2 motif; sequence HMDHH. Helical transmembrane passes span 152–172, 184–204, and 209–229; these read FFCT…FYAF, YLEV…YYFL, and LVYM…SGHF. The short motif at 259–263 is the Histidine box-3 element; sequence HNEHH. The residue at position 307 (S307) is a Phosphoserine.

Belongs to the fatty acid desaturase type 1 family. DEGS subfamily. As to quaternary structure, interacts with RLBP1; the interaction increases synthesis of chromophore-precursors by DEGS1. Myristoylation can target the enzyme to the mitochondria leading to an increase in ceramide levels. As to expression, ubiquitous.

The protein resides in the mitochondrion membrane. Its subcellular location is the endoplasmic reticulum membrane. The catalysed reaction is an N-acylsphinganine + 2 Fe(II)-[cytochrome b5] + O2 + 2 H(+) = an N-acylsphing-4-enine + 2 Fe(III)-[cytochrome b5] + 2 H2O. It carries out the reaction all-trans-retinol = 11-cis-retinol. It catalyses the reaction all-trans-retinol = 9-cis-retinol. The enzyme catalyses all-trans-retinol = 13-cis-retinol. The catalysed reaction is 11-cis-retinol = 13-cis-retinol. It carries out the reaction 11-cis-retinol = 9-cis-retinol. Has sphingolipid-delta-4-desaturase activity. Converts D-erythro-sphinganine to D-erythro-sphingosine (E-sphing-4-enine). Catalyzes the equilibrium isomerization of retinols. This Homo sapiens (Human) protein is Sphingolipid delta(4)-desaturase DES1.